The primary structure comprises 228 residues: Protein ARV 2 (228 aa).

The next 2 membrane-spanning stretches (helical) occupy residues 37–57 (EVADEYVECELLIIFIDLILH) and 80–100 (LLWKLVLAYLLLDTYRSLLLR). N-linked (GlcNAc...) asparagine glycosylation is present at N107. Transmembrane regions (helical) follow at residues 123-143 (VLSANFAFVFSFAFAAKLMLV), 150-170 (ILLTILISSYVKIFLFAMPVW), and 176-196 (VIFIVDMLVLTSNAVALKVMT).

This sequence belongs to the ARV1 family. In terms of tissue distribution, restricted to tissues in which cells are actively dividing or expanding. Mostly expressed in roots and flowers, and, to a lower extent, in stems and leaves.

It localises to the endoplasmic reticulum membrane. Mediator of sterol homeostasis involved in sterol uptake, trafficking and distribution into membranes. Also regulates the sphingolipid metabolism. The polypeptide is Protein ARV 2 (Arabidopsis thaliana (Mouse-ear cress)).